The primary structure comprises 336 residues: Dihydroorotate dehydrogenase (quinone) (336 aa).

Residues 62–66 (AGLDK) and Thr-86 each bind FMN. Residue Lys-66 participates in substrate binding. 111–115 (NRMGF) lines the substrate pocket. Asn-139 and Asn-172 together coordinate FMN. Substrate is bound at residue Asn-172. Ser-175 acts as the Nucleophile in catalysis. Asn-177 contacts substrate. Lys-217 and Thr-245 together coordinate FMN. Residue 246-247 (NT) participates in substrate binding. Residues Gly-268, Gly-297, and 318–319 (YS) each bind FMN.

This sequence belongs to the dihydroorotate dehydrogenase family. Type 2 subfamily. In terms of assembly, monomer. FMN serves as cofactor.

The protein resides in the cell membrane. It carries out the reaction (S)-dihydroorotate + a quinone = orotate + a quinol. The protein operates within pyrimidine metabolism; UMP biosynthesis via de novo pathway; orotate from (S)-dihydroorotate (quinone route): step 1/1. Its function is as follows. Catalyzes the conversion of dihydroorotate to orotate with quinone as electron acceptor. This is Dihydroorotate dehydrogenase (quinone) from Salmonella agona (strain SL483).